Here is a 217-residue protein sequence, read N- to C-terminus: Phosphatidylinositol phosphate synthase (217 aa).

Helical transmembrane passes span 28–49 (LTPD…LTLF) and 55–74 (FAGA…DGAM). An a CDP-1,2-diacyl-sn-glycerol-binding site is contributed by 31-34 (DVVT). Asp-68 and Asp-71 together coordinate Mg(2+). Positions 72, 76, and 82 each coordinate a CDP-1,2-diacyl-sn-glycerol. Asp-89 and Asp-93 together coordinate Mg(2+). The active-site Proton acceptor is the Asp-93. 4 helical membrane-spanning segments follow: residues 95–112 (ISDG…AFHM), 118–136 (VIAT…YIKA), 156–173 (LIIV…FVPW), and 179–200 (VGMW…HTVW).

This sequence belongs to the CDP-alcohol phosphatidyltransferase class-I family. Homodimer. Requires Mg(2+) as cofactor.

It localises to the cell membrane. It carries out the reaction a CDP-1,2-diacyl-sn-glycerol + 1D-myo-inositol 3-phosphate = a 1,2-diacyl-sn-glycero-3-phospho-(1D-myo-inositol-3-phosphate) + CMP + H(+). The enzyme catalyses 1,2-di-(9Z-octadecenoyl)-sn-glycero-3-cytidine-5'-diphosphate + 1D-myo-inositol 3-phosphate = 1,2-di-(9Z-octadecenoyl)-sn-glycero-3-phospho-(1D-myo-inositol-3-phosphate) + CMP + H(+). It functions in the pathway phospholipid metabolism; phosphatidylinositol phosphate biosynthesis. Competitively inhibited by several inositol 1-phosphate analogs, including the phosphonate analog 1-deoxy-1-phosphonomethyl-myo-inositol (Ino-C-P). Its function is as follows. Catalyzes the conjugation of the 1'-hydroxyl group of D-myo-inositol-3-phosphate (also named L-myo-inositol-1-phosphate) with a lipid tail of cytidine diphosphate diacylglycerol (CDP-DAG), forming phosphatidylinositol phosphate (PIP) and CMP. PIP is a precursor of phosphatidylinositol (PI) which is an essential lipid for mycobacteria required for formation of their cell wall. This is Phosphatidylinositol phosphate synthase from Mycobacterium bovis (strain BCG / Pasteur 1173P2).